The following is a 430-amino-acid chain: MSLATSDILKYVQIEIPYKEEFQGKDNVTLLFDEYVQSKTEPVLLLSAEINSRNSDSFFSARPLMEEQQLKLHLKNLNRHIYPSKVLFFGFPLLKINSSIVIIPNHDVKEQEQMGVFPSLIRFKNEKVIVTQTPHKVNEITVTMFNIEWKLSTYQRSIERTPGHPLTTLCTVCSVNINNLPFWFHDVRSGSDFPTCKVFSISDPTVSVLKMIFSPPLLEIYLRCYTEVTKNNTYMVPNDCMLKLGFVNEIIPNEISLTVHMHYFKICSDKRKIDVFFQDTMLFDEGETKKLHFKGTFYNFNANALYVPDPNSKVQSIASFWSPTTSFTTKVTSDRSQRVTTNDIIGSIYFIPTHILRTKFDPNYTDSFAAEIELNSEDPESDALYFLADKIFISDLPDLILRKGWSARKKKLQSGSNINNHAPSKSRLRF.

This is an uncharacterized protein from Human herpesvirus 7 (strain JI) (HHV-7).